A 338-amino-acid chain; its full sequence is Solute-binding protein Rfer_1840 (338 aa).

The N-terminal stretch at 1–25 (MQRRQLLQSMGGLAASTMPFSLAFA) is a signal peptide. Malonate contacts are provided by residues Arg47, Tyr100, Arg175, Ser197, 214–218 (TSSTS), and Glu244.

This sequence belongs to the bacterial solute-binding protein 7 family. As to quaternary structure, the complex is comprised of an extracytoplasmic solute-binding protein and a heteromeric permease formed by two transmembrane proteins.

It is found in the periplasm. Solute-binding protein that binds malonate (in vitro). Probably part of a tripartite ATP-independent periplasmic (TRAP) transport system that mediates solute transport into the cytoplasm. The chain is Solute-binding protein Rfer_1840 from Albidiferax ferrireducens (strain ATCC BAA-621 / DSM 15236 / T118) (Rhodoferax ferrireducens).